A 355-amino-acid chain; its full sequence is Fructose-1,6-bisphosphatase (355 aa).

AMP-binding positions include 25–30 (ILDQQH) and 37–41 (TGEFS). Positions 78 and 107 each coordinate Mg(2+). 121–122 (KY) lines the AMP pocket. 3 residues coordinate Mg(2+): Asp-127, Ile-129, and Asp-130. Substrate is bound at residue 130–133 (DGSS). AMP is bound at residue Lys-149. Residues 230 to 233 (NEGN), 263 to 268 (RYIGSM), Tyr-284, and 294 to 296 (KLR) contribute to the substrate site. Glu-300 contributes to the Mg(2+) binding site.

It belongs to the FBPase class 1 family. In terms of assembly, homotetramer. Requires Mg(2+) as cofactor.

It catalyses the reaction beta-D-fructose 1,6-bisphosphate + H2O = beta-D-fructose 6-phosphate + phosphate. Its pathway is carbohydrate biosynthesis; gluconeogenesis. Its activity is regulated as follows. Subject to complex allosteric regulation. The enzyme can assume an active R-state, or an inactive T-state. Intermediate conformations may exist. AMP acts as allosteric inhibitor. AMP binding affects the turnover of bound substrate and not the affinity for substrate. This is Fructose-1,6-bisphosphatase (FBP1) from Kluyveromyces lactis (strain ATCC 8585 / CBS 2359 / DSM 70799 / NBRC 1267 / NRRL Y-1140 / WM37) (Yeast).